The primary structure comprises 306 residues: D-alanine--D-alanine ligase (306 aa).

Positions 101-303 (KYLWQGCGLP…FSQLVARILE (203 aa)) constitute an ATP-grasp domain. 134 to 189 (IDALGLPLFVKPSREGSSVGISRVNQASELQAALQEAFRFDDEVLVEAFLSGPEYT) serves as a coordination point for ATP. Residues D257, E270, and N272 each coordinate Mg(2+).

It belongs to the D-alanine--D-alanine ligase family. Mg(2+) is required as a cofactor. The cofactor is Mn(2+).

The protein resides in the cytoplasm. It carries out the reaction 2 D-alanine + ATP = D-alanyl-D-alanine + ADP + phosphate + H(+). It functions in the pathway cell wall biogenesis; peptidoglycan biosynthesis. In terms of biological role, cell wall formation. This Erwinia tasmaniensis (strain DSM 17950 / CFBP 7177 / CIP 109463 / NCPPB 4357 / Et1/99) protein is D-alanine--D-alanine ligase.